The following is a 456-amino-acid chain: N(6)-adenosine-methyltransferase non-catalytic subunit METTL14 (456 aa).

The disordered stretch occupies residues 43–74 (EIAETRETSRASYDTSAAVSKRKLPEEGKADE). Residues 65–74 (KLPEEGKADE) show a composition bias toward basic and acidic residues. Interaction with METTL3 regions lie at residues 135–136 (RD) and 237–238 (SG). The interval 245-254 (RMCLRKWGFR) is positively charged region required for RNA-binding. Interaction with METTL3 stretches follow at residues 255–258 (RSED) and 278–287 (KAIFQRTKEH). Residues 297-298 (HR) form a positively charged region required for RNA-binding region. Positions 308–312 (NVDID) are interaction with METTL3. Positions 395–456 (LRPKTPPPKS…GPHRGVFAPR (62 aa)) are disordered. The segment covering 410–421 (ASRGGGRGGASA) has biased composition (gly residues). The span at 423 to 441 (RGERGRERNRGSFRGDRGN) shows a compositional bias: basic and acidic residues.

The protein belongs to the MT-A70-like family. In terms of assembly, heterodimer; heterodimerizes with mettl3 to form an antiparallel heterodimer that constitutes an active methyltransferase. Component of the WMM complex, a N6-methyltransferase complex composed of a catalytic subcomplex, named MAC, and of an associated subcomplex, named MACOM. The MAC subcomplex is composed of mettl3 and mettl14.

It localises to the nucleus. Functionally, the METTL3-METTL14 heterodimer forms a N6-methyltransferase complex that methylates adenosine residues at the N(6) position of some mRNAs and regulates the circadian clock, differentiation of embryonic stem cells and cortical neurogenesis. In the heterodimer formed with mettl3, mettl14 constitutes the RNA-binding scaffold that recognizes the substrate rather than the catalytic core. N6-methyladenosine (m6A), which takes place at the 5'-[AG]GAC-3' consensus sites of some mRNAs, plays a role in mRNA stability and processing. The chain is N(6)-adenosine-methyltransferase non-catalytic subunit METTL14 (mettl14) from Xenopus laevis (African clawed frog).